The following is a 34-amino-acid chain: Photosystem II reaction center protein M (34 aa).

The chain crosses the membrane as a helical span at residues 5 to 25 (ILAFIATALFILIPTAFLLII).

The protein belongs to the PsbM family. PSII is composed of 1 copy each of membrane proteins PsbA, PsbB, PsbC, PsbD, PsbE, PsbF, PsbH, PsbI, PsbJ, PsbK, PsbL, PsbM, PsbT, PsbX, PsbY, PsbZ, Psb30/Ycf12, at least 3 peripheral proteins of the oxygen-evolving complex and a large number of cofactors. It forms dimeric complexes.

Its subcellular location is the plastid. It is found in the chloroplast thylakoid membrane. Functionally, one of the components of the core complex of photosystem II (PSII). PSII is a light-driven water:plastoquinone oxidoreductase that uses light energy to abstract electrons from H(2)O, generating O(2) and a proton gradient subsequently used for ATP formation. It consists of a core antenna complex that captures photons, and an electron transfer chain that converts photonic excitation into a charge separation. This subunit is found at the monomer-monomer interface. The protein is Photosystem II reaction center protein M of Lolium perenne (Perennial ryegrass).